An 818-amino-acid polypeptide reads, in one-letter code: ATM interactor (818 aa).

Positions 1 to 34 (MAATEAAAADSAGPAPGVPATPASTRGAAAASSP) are enriched in low complexity. The disordered stretch occupies residues 1–62 (MAATEAAAAD…RAAAPVPPAR (62 aa)). Residues 80 to 105 (ILCTVRGCGKILPNSPALNMHLVKSH) form a C2H2-type 1 zinc finger. A C2H2-type 2; degenerate zinc finger spans residues 161–181 (HKCSKCSNSYGTEWDLKRHEE). The span at 210-221 (HEIPAEHRDPPS) shows a compositional bias: basic and acidic residues. Disordered stretches follow at residues 210–284 (HEIP…ATPP) and 603–625 (DNRS…GSAQ). The segment at 219 to 437 (PPSKKRKMES…PDSSVSSCSQ (219 aa)) is required for formation of RAD51 foci. Polar residues-rich tracts occupy residues 229-243 (YLQN…TEPL) and 603-612 (DNRSLLSDTN).

Interacts via its C-terminus with ATM. Interacts with DYNLL; this interaction inhibits ATMIN transcriptional activity and hence may play a role in a feedback loop whereby DYNLL1 inhibits transactivation of its own promoter by ATMIN. ATMIN.

It localises to the nucleus. In terms of biological role, transcription factor. Plays a crucial role in cell survival and RAD51 foci formation in response to methylating DNA damage. Involved in regulating the activity of ATM in the absence of DNA damage. May play a role in stabilizing ATM. Binds to the DYNLL1 promoter and activates its transcription. In Mus musculus (Mouse), this protein is ATM interactor.